Reading from the N-terminus, the 486-residue chain is MAINPLKILFVASEVEGLVKTGGLADVARALPLYLAQKGHDVRIILPFYKTIKRRDEARLIASRWLPTHPGLPDIGYRIYQMELEGVCVYLLDCPQYFDRPQLYAENNQAYGDNGERFAFFSAAALHACEQLDFAPEIVHCNDWHTGLLPLLLKTRHAHNPFFQHTRSVISIHNAAFQGVFGREQFWAMPEIADYEQRISYDYGHVNLLKCGVLYADKINAVSPNYASELLTHLGAHGMANIFQQRAADLRGILNGCDYKDWDPAFDDFLPATYDVDNLAGKRVCKQTLQQEAGLPVTDLPIYGMVCRLTEQKGVHLLLPVLDKFLHHKVQVVIVGSGDPSLAAQLQATAQRYPDKLAFLNTYDDRLAHLVEAGADFFLMPSLFEPCGLNQMYSLAYGTLPLVRAVGGLKDTVVDWDAEPEHATGFCFNDPTANILLDAMRRSLLYYLQDPERFAQVQRNAMNTRFNWPDSVTQYEQMYQDALARQ.

Lysine 20 lines the ADP-alpha-D-glucose pocket.

The protein belongs to the glycosyltransferase 1 family. Bacterial/plant glycogen synthase subfamily.

It catalyses the reaction [(1-&gt;4)-alpha-D-glucosyl](n) + ADP-alpha-D-glucose = [(1-&gt;4)-alpha-D-glucosyl](n+1) + ADP + H(+). The protein operates within glycan biosynthesis; glycogen biosynthesis. Functionally, synthesizes alpha-1,4-glucan chains using ADP-glucose. This Aeromonas salmonicida (strain A449) protein is Glycogen synthase.